The following is a 106-amino-acid chain: Toxin-like structure LSTX-D7 (106 aa).

A signal peptide spans 1-20; sequence MMKVLVVFALLVTLISYSSS. Positions 21–41 are excised as a propeptide; the sequence is EGIDDLEADELLSLMANEQTR. Intrachain disulfides connect C45-C60, C52-C69, C59-C85, and C71-C83.

The protein belongs to the neurotoxin 19 (CSTX) family. 02 (D7) subfamily. Expressed by the venom gland.

It localises to the secreted. This is Toxin-like structure LSTX-D7 from Lycosa singoriensis (Wolf spider).